The chain runs to 119 residues: Holo-[acyl-carrier-protein] synthase (119 aa).

Residues Asp8 and Glu58 each coordinate Mg(2+).

Belongs to the P-Pant transferase superfamily. AcpS family. Mg(2+) is required as a cofactor.

It localises to the cytoplasm. It catalyses the reaction apo-[ACP] + CoA = holo-[ACP] + adenosine 3',5'-bisphosphate + H(+). Transfers the 4'-phosphopantetheine moiety from coenzyme A to a Ser of acyl-carrier-protein. The chain is Holo-[acyl-carrier-protein] synthase from Bacillus cereus (strain B4264).